The chain runs to 226 residues: Lysosomal-associated transmembrane protein 4B (226 aa).

4 consecutive transmembrane segments (helical) span residues 26-46, 72-92, 100-120, and 153-173; these read ILLG…LLSA, MCIA…ATYG, WIIP…LVAV, and CLVL…GYLI. The interval 205 to 221 is required for NEDD4 interaction; the sequence is PPYDDATVNSATKEPPP.

Belongs to the LAPTM4/LAPTM5 transporter family. As to quaternary structure, homooligomer; upon reaching the lysosomes. Interacts with MCOLN1. Interacts with NEDD4; may play a role in the lysosomal sorting of LAPTM4B; enhances HGS association with NEDD4; mediates inhibition of EGFR degradation. Interacts with PIP5K1C; promotes SNX5 association with LAPTM4B; kinase activity of PIP5K1C is required; interaction is regulated by phosphatidylinositol 4,5-bisphosphate generated by PIP5K1C. Interacts with HGS; promotes HGS ubiquitination. Interacts with SNX5. Interacts with SLC3A2 and SLC7A5; recruits SLC3A2 and SLC7A5 to lysosomes to promote leucine uptake into these organelles and is required for mTORC1 activation. Interacts with LRRC32; decreases TGFB1 production in regulatory T cells. Interacts with BECN1; competes with EGFR for LAPTM4B binding; regulates EGFR activity. Interacts with EGFR; positively correlates with EGFR activation. In terms of processing, undergoes proteolytic cleavage following delivery to the lysosomes. Ubiquitinated by NEDD4. Strongly expressed in fetal ovary, testis, adrenal gland, liver and uterus, and weakly expressed in the spleen.

The protein localises to the endomembrane system. It localises to the late endosome membrane. Its subcellular location is the cell membrane. It is found in the cell projection. The protein resides in the lysosome membrane. The protein localises to the endosome membrane. It localises to the endosome. Its subcellular location is the multivesicular body membrane. It is found in the multivesicular body lumen. In terms of biological role, required for optimal lysosomal function. Blocks EGF-stimulated EGFR intraluminal sorting and degradation. Conversely by binding with the phosphatidylinositol 4,5-bisphosphate, regulates its PIP5K1C interaction, inhibits HGS ubiquitination and relieves LAPTM4B inhibition of EGFR degradation. Recruits SLC3A2 and SLC7A5 (the Leu transporter) to the lysosome, promoting entry of leucine and other essential amino acid (EAA) into the lysosome, stimulating activation of proton-transporting vacuolar (V)-ATPase protein pump (V-ATPase) and hence mTORC1 activation. Plays a role as negative regulator of TGFB1 production in regulatory T cells. Binds ceramide and facilitates its exit from late endosome in order to control cell death pathways. The chain is Lysosomal-associated transmembrane protein 4B from Bos taurus (Bovine).